A 708-amino-acid chain; its full sequence is Exocyst complex component 8 (708 aa).

Positions 168–268 constitute a PH domain; the sequence is YLVYNGDLLE…WLEVLEETKR (101 aa). Residues 271–282 show a composition bias toward basic and acidic residues; the sequence is ALSEKRRLEQEA. The tract at residues 271-314 is disordered; it reads ALSEKRRLEQEALPRPAPTPPESTNPFEEEEEEEEEPSAEEEAV. A compositionally biased stretch (acidic residues) spans 297 to 314; it reads FEEEEEEEEEPSAEEEAV.

This sequence belongs to the EXO84 family. As to quaternary structure, the exocyst complex is composed of EXOC1, EXOC2, EXOC3, EXOC4, EXOC5, EXOC6, EXOC7 and EXOC8.

The protein localises to the cytoplasm. It localises to the perinuclear region. It is found in the cell projection. The protein resides in the growth cone. Its function is as follows. Component of the exocyst complex involved in the docking of exocytic vesicles with fusion sites on the plasma membrane. The polypeptide is Exocyst complex component 8 (EXOC8) (Gallus gallus (Chicken)).